The primary structure comprises 142 residues: Large-conductance mechanosensitive channel (142 aa).

Transmembrane regions (helical) follow at residues 15–35, 38–58, and 82–102; these read AFVMRGNVVDLAVGVIIGAAF, IVTSLVNDIFMPIIGMIIGNI, and GMFIQEIVNFLIIALCVFVAI.

It belongs to the MscL family. Homopentamer.

Its subcellular location is the cell inner membrane. Channel that opens in response to stretch forces in the membrane lipid bilayer. May participate in the regulation of osmotic pressure changes within the cell. The polypeptide is Large-conductance mechanosensitive channel (Fusobacterium nucleatum subsp. nucleatum (strain ATCC 25586 / DSM 15643 / BCRC 10681 / CIP 101130 / JCM 8532 / KCTC 2640 / LMG 13131 / VPI 4355)).